The sequence spans 220 residues: Iron-sulfur cluster repair protein YtfE (220 aa).

This sequence belongs to the RIC family. YtfE subfamily. As to quaternary structure, homodimer.

The protein localises to the cytoplasm. Di-iron-containing protein involved in the repair of iron-sulfur clusters damaged by oxidative and nitrosative stress conditions. The protein is Iron-sulfur cluster repair protein YtfE of Escherichia coli O81 (strain ED1a).